The following is a 165-amino-acid chain: Small ribosomal subunit protein uS5 (165 aa).

In terms of domain architecture, S5 DRBM spans 10-73 (LKEKVVSISR…EDAKKNLVEV (64 aa)).

This sequence belongs to the universal ribosomal protein uS5 family. Part of the 30S ribosomal subunit. Contacts proteins S4 and S8.

In terms of biological role, with S4 and S12 plays an important role in translational accuracy. Its function is as follows. Located at the back of the 30S subunit body where it stabilizes the conformation of the head with respect to the body. The sequence is that of Small ribosomal subunit protein uS5 from Clostridium perfringens (strain ATCC 13124 / DSM 756 / JCM 1290 / NCIMB 6125 / NCTC 8237 / Type A).